Reading from the N-terminus, the 319-residue chain is Cobalamin biosynthesis protein CbiB (319 aa).

4 helical membrane passes run 56 to 76 (VMWV…LALA), 82 to 102 (WFGW…RSLA), 153 to 173 (VDGI…LAMA), and 296 to 316 (LMWV…CGLS).

This sequence belongs to the CobD/CbiB family.

The protein resides in the cell membrane. Its pathway is cofactor biosynthesis; adenosylcobalamin biosynthesis. Functionally, converts cobyric acid to cobinamide by the addition of aminopropanol on the F carboxylic group. However, the true cosubstrate could be (R)-1-amino-2-propanol O-2-phosphate, leading to cobinamide phosphate. This Salmonella paratyphi A (strain ATCC 9150 / SARB42) protein is Cobalamin biosynthesis protein CbiB.